A 72-amino-acid polypeptide reads, in one-letter code: Translation initiation factor IF-1 (72 aa).

Positions 1-72 (MSKQDVIELE…SRGRITWRKK (72 aa)) constitute an S1-like domain.

The protein belongs to the IF-1 family. In terms of assembly, component of the 30S ribosomal translation pre-initiation complex which assembles on the 30S ribosome in the order IF-2 and IF-3, IF-1 and N-formylmethionyl-tRNA(fMet); mRNA recruitment can occur at any time during PIC assembly.

The protein resides in the cytoplasm. One of the essential components for the initiation of protein synthesis. Stabilizes the binding of IF-2 and IF-3 on the 30S subunit to which N-formylmethionyl-tRNA(fMet) subsequently binds. Helps modulate mRNA selection, yielding the 30S pre-initiation complex (PIC). Upon addition of the 50S ribosomal subunit IF-1, IF-2 and IF-3 are released leaving the mature 70S translation initiation complex. This chain is Translation initiation factor IF-1, found in Alkaliphilus oremlandii (strain OhILAs) (Clostridium oremlandii (strain OhILAs)).